The chain runs to 1071 residues: DNA-directed RNA polymerase subunit beta (1071 aa).

This sequence belongs to the RNA polymerase beta chain family. As to quaternary structure, in plastids the minimal PEP RNA polymerase catalytic core is composed of four subunits: alpha, beta, beta', and beta''. When a (nuclear-encoded) sigma factor is associated with the core the holoenzyme is formed, which can initiate transcription.

The protein resides in the plastid. It is found in the chloroplast. The catalysed reaction is RNA(n) + a ribonucleoside 5'-triphosphate = RNA(n+1) + diphosphate. Its function is as follows. DNA-dependent RNA polymerase catalyzes the transcription of DNA into RNA using the four ribonucleoside triphosphates as substrates. This chain is DNA-directed RNA polymerase subunit beta, found in Anthoceros angustus (Hornwort).